Reading from the N-terminus, the 407-residue chain is Methylthioribose kinase (407 aa).

ATP is bound by residues Asn-40, Lys-57, and 111 to 113 (EDL). Asp-229 lines the substrate pocket. 246–248 (DAE) is a binding site for ATP. Arg-344 lines the substrate pocket.

Belongs to the methylthioribose kinase family. In terms of assembly, homodimer.

The enzyme catalyses 5-(methylsulfanyl)-D-ribose + ATP = 5-(methylsulfanyl)-alpha-D-ribose 1-phosphate + ADP + H(+). The protein operates within amino-acid biosynthesis; L-methionine biosynthesis via salvage pathway; S-methyl-5-thio-alpha-D-ribose 1-phosphate from S-methyl-5'-thioadenosine (hydrolase route): step 2/2. Functionally, catalyzes the phosphorylation of methylthioribose into methylthioribose-1-phosphate. The sequence is that of Methylthioribose kinase from Yersinia pseudotuberculosis serotype O:1b (strain IP 31758).